The sequence spans 711 residues: Toxin RTX-III translocation ATP-binding protein (711 aa).

In terms of domain architecture, Peptidase C39 spans 1–129 (MESQMPFNEK…EIFQGGMILI (129 aa)). His-87 is an active-site residue. The ABC transmembrane type-1 domain maps to 158 to 440 (FVETIIVSIF…LAQLWQDFQQ (283 aa)). The next 5 helical transmembrane spans lie at 162–182 (IIVS…FQVV), 195–215 (LNVI…LSGL), 273–293 (ALTS…MWYY), 299–319 (IVIL…SPIL), and 392–412 (VMII…LSIG). The ABC transporter domain occupies 472-707 (IAFKHIRFRY…ENGLYYYLNQ (236 aa)). Residue 506–513 (GRSGSGKS) participates in ATP binding.

The protein belongs to the ABC transporter superfamily. Protein-1 exporter (TC 3.A.1.109) family. In terms of assembly, homodimer.

Its subcellular location is the cell membrane. In terms of biological role, involved in the transport of the toxin RTX-III. This Actinobacillus pleuropneumoniae (Haemophilus pleuropneumoniae) protein is Toxin RTX-III translocation ATP-binding protein (apxIIIB).